A 556-amino-acid polypeptide reads, in one-letter code: Formate--tetrahydrofolate ligase (556 aa).

65–72 (TAAGEGKS) lines the ATP pocket.

The protein belongs to the formate--tetrahydrofolate ligase family.

It carries out the reaction (6S)-5,6,7,8-tetrahydrofolate + formate + ATP = (6R)-10-formyltetrahydrofolate + ADP + phosphate. It functions in the pathway one-carbon metabolism; tetrahydrofolate interconversion. The chain is Formate--tetrahydrofolate ligase from Elusimicrobium minutum (strain Pei191).